Consider the following 272-residue polypeptide: UPF0759 protein YecE (272 aa).

Belongs to the UPF0759 family.

The protein is UPF0759 protein YecE (yecE) of Escherichia coli O157:H7.